A 269-amino-acid polypeptide reads, in one-letter code: 2-dehydro-3-deoxyphosphooctonate aldolase (269 aa).

Belongs to the KdsA family.

Its subcellular location is the cytoplasm. It carries out the reaction D-arabinose 5-phosphate + phosphoenolpyruvate + H2O = 3-deoxy-alpha-D-manno-2-octulosonate-8-phosphate + phosphate. It functions in the pathway carbohydrate biosynthesis; 3-deoxy-D-manno-octulosonate biosynthesis; 3-deoxy-D-manno-octulosonate from D-ribulose 5-phosphate: step 2/3. The protein operates within bacterial outer membrane biogenesis; lipopolysaccharide biosynthesis. The polypeptide is 2-dehydro-3-deoxyphosphooctonate aldolase (Chlamydia abortus (strain DSM 27085 / S26/3) (Chlamydophila abortus)).